The sequence spans 367 residues: Cytochrome P450 119 (367 aa).

Heme contacts are provided by His-76, Arg-80, Thr-257, Arg-259, His-315, and Cys-317.

It belongs to the cytochrome P450 family. Heme is required as a cofactor.

Its subcellular location is the cytoplasm. In Sulfurisphaera tokodaii (strain DSM 16993 / JCM 10545 / NBRC 100140 / 7) (Sulfolobus tokodaii), this protein is Cytochrome P450 119 (cyp119).